Here is a 128-residue protein sequence, read N- to C-terminus: Elongation factor G (128 aa).

The protein belongs to the GTP-binding elongation factor family. EF-G/EF-2 subfamily.

The protein localises to the cytoplasm. Functionally, catalyzes the GTP-dependent ribosomal translocation step during translation elongation. During this step, the ribosome changes from the pre-translocational (PRE) to the post-translocational (POST) state as the newly formed A-site-bound peptidyl-tRNA and P-site-bound deacylated tRNA move to the P and E sites, respectively. Catalyzes the coordinated movement of the two tRNA molecules, the mRNA and conformational changes in the ribosome. The protein is Elongation factor G (fusA) of Planobispora rosea.